Reading from the N-terminus, the 722-residue chain is Glycine--tRNA ligase beta subunit (722 aa).

It belongs to the class-II aminoacyl-tRNA synthetase family. In terms of assembly, tetramer of two alpha and two beta subunits.

The protein localises to the cytoplasm. It catalyses the reaction tRNA(Gly) + glycine + ATP = glycyl-tRNA(Gly) + AMP + diphosphate. This Synechocystis sp. (strain ATCC 27184 / PCC 6803 / Kazusa) protein is Glycine--tRNA ligase beta subunit (glyS).